The following is a 207-amino-acid chain: Ribosomal RNA small subunit methyltransferase G (207 aa).

S-adenosyl-L-methionine is bound by residues glycine 73, leucine 78, 124–125 (VE), and arginine 139.

Belongs to the methyltransferase superfamily. RNA methyltransferase RsmG family.

The protein resides in the cytoplasm. It catalyses the reaction guanosine(527) in 16S rRNA + S-adenosyl-L-methionine = N(7)-methylguanosine(527) in 16S rRNA + S-adenosyl-L-homocysteine. In terms of biological role, specifically methylates the N7 position of guanine in position 527 of 16S rRNA. The polypeptide is Ribosomal RNA small subunit methyltransferase G (Escherichia fergusonii (strain ATCC 35469 / DSM 13698 / CCUG 18766 / IAM 14443 / JCM 21226 / LMG 7866 / NBRC 102419 / NCTC 12128 / CDC 0568-73)).